Reading from the N-terminus, the 280-residue chain is Secreted RxLR effector protein 39 (280 aa).

The first 19 residues, 1 to 19 (MRGAYYVAIALLIVASCSA), serve as a signal peptide directing secretion. The RxLR-dEER motif lies at 49 to 70 (RVLRGSRDLKNKWAVHAGGEDR). A disordered region spans residues 229 to 249 (EVKARSSKRQRTNPMLNNMDG).

The protein belongs to the RxLR effector family.

It is found in the secreted. The protein resides in the host nucleus. Its function is as follows. Secreted effector that completely suppresses the host cell death induced by cell death-inducing proteins. This chain is Secreted RxLR effector protein 39, found in Plasmopara viticola (Downy mildew of grapevine).